Here is a 287-residue protein sequence, read N- to C-terminus: Ribosomal RNA small subunit methyltransferase A (287 aa).

The span at 1–15 (MSKTTFDAQSITNSL) shows a compositional bias: polar residues. A disordered region spans residues 1 to 20 (MSKTTFDAQSITNSLRAAKH). S-adenosyl-L-methionine contacts are provided by N29, L31, G56, E77, and N126.

This sequence belongs to the class I-like SAM-binding methyltransferase superfamily. rRNA adenine N(6)-methyltransferase family. RsmA subfamily.

The protein resides in the cytoplasm. It carries out the reaction adenosine(1518)/adenosine(1519) in 16S rRNA + 4 S-adenosyl-L-methionine = N(6)-dimethyladenosine(1518)/N(6)-dimethyladenosine(1519) in 16S rRNA + 4 S-adenosyl-L-homocysteine + 4 H(+). In terms of biological role, specifically dimethylates two adjacent adenosines (A1518 and A1519) in the loop of a conserved hairpin near the 3'-end of 16S rRNA in the 30S particle. May play a critical role in biogenesis of 30S subunits. The sequence is that of Ribosomal RNA small subunit methyltransferase A from Psychrobacter cryohalolentis (strain ATCC BAA-1226 / DSM 17306 / VKM B-2378 / K5).